A 92-amino-acid polypeptide reads, in one-letter code: Probable Fe(2+)-trafficking protein (92 aa).

The protein belongs to the Fe(2+)-trafficking protein family.

In terms of biological role, could be a mediator in iron transactions between iron acquisition and iron-requiring processes, such as synthesis and/or repair of Fe-S clusters in biosynthetic enzymes. The chain is Probable Fe(2+)-trafficking protein from Shewanella piezotolerans (strain WP3 / JCM 13877).